Consider the following 350-residue polypeptide: Probable DNA polymerase III subunit delta (350 aa).

Belongs to the DNA polymerase HolA subunit family. In terms of assembly, component of the DNA clamp loading complex consisting of tau(3):delta(1):delta'(1). The DNA polymerase III holoenzyme complex contains at least 10 different subunits organized into 3 functionally essential subassemblies: the Pol III core, the beta sliding clamp processivity factor and the clamp-loading complex. The Pol III core (subunits alpha, epsilon and theta) contains the polymerase and the 3'-5' exonuclease proofreading activities. The polymerase is tethered to the template via the dimeric beta sliding clamp processivity factor. The DNA clamp-loading complex assembles the beta sliding clamp onto the primed template and plays a central role in the organization and communication at the replication fork.

The catalysed reaction is DNA(n) + a 2'-deoxyribonucleoside 5'-triphosphate = DNA(n+1) + diphosphate. Functionally, part of the beta sliding clamp loading complex, which hydrolyzes ATP to load the beta clamp onto primed DNA to form the DNA replication pre-initiation complex. DNA polymerase III is a complex, multichain enzyme responsible for most of the replicative synthesis in bacteria. This DNA polymerase also exhibits 3'-5' exonuclease activity. The delta subunit is the wrench that will open the beta subunit dimer. The DNA clamp loading complex (tau(3),delta,delta') is thought to load beta dimers onto DNA by binding ATP which alters the complex's conformation so it can bind beta sliding clamp dimers and open them at one interface. Primed DNA is recognized, ATP is hydrolyzed releasing the clamp loading complex and closing the beta sliding clamp ring around the primed DNA. In Aquifex aeolicus (strain VF5), this protein is Probable DNA polymerase III subunit delta.